The chain runs to 234 residues: Octanoyltransferase (234 aa).

The 185-residue stretch at 42–226 (PDTPDEFWVV…ELASLIGYET (185 aa)) folds into the BPL/LPL catalytic domain. Substrate is bound by residues 81 to 88 (RGGQVTYH), 157 to 159 (SLG), and 170 to 172 (GLA). Cys188 acts as the Acyl-thioester intermediate in catalysis.

It belongs to the LipB family.

The protein resides in the cytoplasm. The catalysed reaction is octanoyl-[ACP] + L-lysyl-[protein] = N(6)-octanoyl-L-lysyl-[protein] + holo-[ACP] + H(+). It functions in the pathway protein modification; protein lipoylation via endogenous pathway; protein N(6)-(lipoyl)lysine from octanoyl-[acyl-carrier-protein]: step 1/2. In terms of biological role, catalyzes the transfer of endogenously produced octanoic acid from octanoyl-acyl-carrier-protein onto the lipoyl domains of lipoate-dependent enzymes. Lipoyl-ACP can also act as a substrate although octanoyl-ACP is likely to be the physiological substrate. The polypeptide is Octanoyltransferase (Aeromonas hydrophila subsp. hydrophila (strain ATCC 7966 / DSM 30187 / BCRC 13018 / CCUG 14551 / JCM 1027 / KCTC 2358 / NCIMB 9240 / NCTC 8049)).